Reading from the N-terminus, the 198-residue chain is Sorcin (198 aa).

4 consecutive EF-hand domains span residues glycine 29–alanine 64, phenylalanine 70–asparagine 103, alanine 100–arginine 135, and phenylalanine 134–leucine 169. Ca(2+) is bound by residues aspartate 83, aspartate 85, serine 87, threonine 89, glutamate 94, aspartate 113, aspartate 115, serine 117, threonine 119, and glutamate 124.

Homodimer. Interacts with GCA, RYR2 and ANXA7. In terms of tissue distribution, detected in cardiac myocytes.

It localises to the cytoplasm. The protein resides in the sarcoplasmic reticulum membrane. Calcium-binding protein that modulates excitation-contraction coupling in the heart. Contributes to calcium homeostasis in the heart sarcoplasmic reticulum. Modulates the activity of RYR2 calcium channels. The sequence is that of Sorcin (SRI) from Homo sapiens (Human).